The chain runs to 364 residues: Geranylgeranyl pyrophosphate synthase janG (364 aa).

3 residues coordinate isopentenyl diphosphate: lysine 83, arginine 86, and histidine 115. Residues aspartate 122 and aspartate 126 each contribute to the Mg(2+) site. Arginine 131 provides a ligand contact to dimethylallyl diphosphate. Residue arginine 132 coordinates isopentenyl diphosphate. Positions 209, 210, and 243 each coordinate dimethylallyl diphosphate. Mg(2+) is bound at residue aspartate 246. Residues asparagine 250, lysine 260, and lysine 270 each coordinate dimethylallyl diphosphate.

It belongs to the FPP/GGPP synthase family. Mg(2+) serves as cofactor.

It carries out the reaction isopentenyl diphosphate + dimethylallyl diphosphate = (2E)-geranyl diphosphate + diphosphate. The catalysed reaction is isopentenyl diphosphate + (2E)-geranyl diphosphate = (2E,6E)-farnesyl diphosphate + diphosphate. The enzyme catalyses isopentenyl diphosphate + (2E,6E)-farnesyl diphosphate = (2E,6E,10E)-geranylgeranyl diphosphate + diphosphate. It functions in the pathway secondary metabolite biosynthesis. Functionally, geranylgeranyl pyrophosphate synthase; part of the gene cluster that mediates the biosynthesis of the indole diterpenes janthitremanes such as shearinine K or shearinine A. The geranylgeranyl diphosphate (GGPP) synthase janG catalyzes the first step in janthitremane biosynthesis via conversion of farnesyl pyrophosphate and isopentyl pyrophosphate into geranylgeranyl pyrophosphate (GGPP). Condensation of indole-3-glycerol phosphate with GGPP by the prenyl transferase janC then forms 3-geranylgeranylindole (3-GGI). Epoxidation by the FAD-dependent monooxygenase janM leads to a epoxidized-GGI that is substrate of the terpene cyclase janB for cyclization to yield paspaline. Paspaline is subsequently converted to 13-desoxypaspaline by the cytochrome P450 monooxygenase janP, via beta-PC-M6 in a series of alpha-face oxidations. The cytochrome P450 monooxygenase janQ is proposed to carry out sequential beta-face oxidation steps at C-7 and C-13 of 13-desoxypaspaline to form paspalicine and paspalinine respectively. The indole diterpene prenyltransferase janD may then convert paspalinine into shearinine K which is substrate of janO and/or additional enzymes for oxidation and cyclization to generate shearinine A. The chain is Geranylgeranyl pyrophosphate synthase janG from Penicillium janthinellum (Penicillium vitale).